Reading from the N-terminus, the 113-residue chain is MAPKMKAAMKAMKAPAMKGKAMTKTGLAEAWRRRPSFLRRTAGQSWRAWPRSCAAEVKKTGKLTIPGLVMVKTRKKPATKAGKREMFGKVVLVKASCQDVVKAYPVKALKTDF.

Positions 1–20 (MAPKMKAAMKAMKAPAMKGK) are disordered.

It is found in the nucleus. In Crypthecodinium cohnii (Dinoflagellate), this protein is Major basic nuclear protein 1 (HCc1).